A 277-amino-acid chain; its full sequence is PTS system sorbose-specific EIIC component (277 aa).

Transmembrane regions (helical) follow at residues 1–21 (MAIS…VGMG), 92–112 (IQKG…LTVL), 133–153 (FTAI…RVSI), 177–197 (VITG…YAMI), and 219–239 (YLKL…IVYV). A PTS EIIC type-4 domain is found at 3–237 (ISTIQIILIF…GAVGLIFAIV (235 aa)).

It localises to the cell membrane. Functionally, the phosphoenolpyruvate-dependent sugar phosphotransferase system (PTS), a major carbohydrate active transport system, catalyzes the phosphorylation of incoming sugar substrates concomitant with their translocation across the cell membrane. The enzyme II SorABCD PTS system is involved in L-sorbose transport. This chain is PTS system sorbose-specific EIIC component, found in Lacticaseibacillus casei (Lactobacillus casei).